A 347-amino-acid chain; its full sequence is Sensor protein VraS (347 aa).

Transmembrane regions (helical) follow at residues 13 to 33 (ILVYSMLAAFLFIDKVFVNII) and 43 to 63 (IFGIPVFLFLNLIIILLCIIV). The Histidine kinase domain maps to 150–341 (RLARELHDSV…RIEVKAPLNK (192 aa)). Residue histidine 156 is modified to Phosphohistidine.

Post-translationally, autophosphorylated on His-156.

Its subcellular location is the cell membrane. The enzyme catalyses ATP + protein L-histidine = ADP + protein N-phospho-L-histidine.. In terms of biological role, member of the two-component regulatory system PprA/PprB involved in biofilm formation by controlling the expression of many related genes including type IVb pili major subunit flp pilin, adhesin bapA or cupE fimbriae. Also modulates quorum-sensing signal production acting on both negative and positive modulators. Functions as a heme sensor histidine kinase which is autophosphorylated at a histidine residue and transfers its phosphate group to PprB. This is Sensor protein VraS (vraS) from Staphylococcus aureus (strain COL).